The sequence spans 351 residues: THO complex subunit 3 (351 aa).

Residues M1–S20 are disordered. A2 carries the post-translational modification N-acetylalanine. WD repeat units lie at residues A53–N94, G97–T137, N139–E178, Q180–N221, A222–C261, and R264–E303.

Belongs to the THOC3 family. In terms of assembly, component of the THO subcomplex, which is composed of THOC1, THOC2, THOC3, THOC5, THOC6 and THOC7. The THO subcomplex interacts with DDX39B to form the THO-DDX39B complex which multimerizes into a 28-subunit tetrameric assembly. Component of the transcription/export (TREX) complex at least composed of ALYREF/THOC4, DDX39B, SARNP/CIP29, CHTOP and the THO subcomplex; in the complex interacts with THOC2. TREX seems to have a dynamic structure involving ATP-dependent remodeling.

The protein localises to the nucleus. It localises to the nucleus speckle. Functionally, component of the THO subcomplex of the TREX complex which is thought to couple mRNA transcription, processing and nuclear export, and which specifically associates with spliced mRNA and not with unspliced pre-mRNA. Required for efficient export of polyadenylated RNA and spliced mRNA. The THOC1-THOC2-THOC3 core complex alone is sufficient to bind export factor NXF1-NXT1 and promote ATPase activity of DDX39B. TREX is recruited to spliced mRNAs by a transcription-independent mechanism, binds to mRNA upstream of the exon-junction complex (EJC) and is recruited in a splicing- and cap-dependent manner to a region near the 5' end of the mRNA where it functions in mRNA export to the cytoplasm via the TAP/NXF1 pathway. In terms of biological role, (Microbial infection) The TREX complex is essential for the export of Kaposi's sarcoma-associated herpesvirus (KSHV) intronless mRNAs and infectious virus production. In Homo sapiens (Human), this protein is THO complex subunit 3 (THOC3).